Reading from the N-terminus, the 71-residue chain is DNA-directed RNA polymerase subunit epsilon (71 aa).

Belongs to the RNA polymerase subunit epsilon family. RNAP is composed of a core of 2 alpha, a beta and a beta' subunit. The core is associated with a delta subunit, and at least one of epsilon or omega. When a sigma factor is associated with the core the holoenzyme is formed, which can initiate transcription.

It catalyses the reaction RNA(n) + a ribonucleoside 5'-triphosphate = RNA(n+1) + diphosphate. In terms of biological role, a non-essential component of RNA polymerase (RNAP). This Staphylococcus saprophyticus subsp. saprophyticus (strain ATCC 15305 / DSM 20229 / NCIMB 8711 / NCTC 7292 / S-41) protein is DNA-directed RNA polymerase subunit epsilon.